An 82-amino-acid chain; its full sequence is Small ribosomal subunit protein eS21z (82 aa).

N-acetylmethionine is present on M1.

It belongs to the eukaryotic ribosomal protein eS21 family.

In Arabidopsis thaliana (Mouse-ear cress), this protein is Small ribosomal subunit protein eS21z (RPS21B).